A 465-amino-acid chain; its full sequence is Ribulose bisphosphate carboxylase large chain (465 aa).

K4 carries the N6,N6,N6-trimethyllysine modification. N113 and T163 together coordinate substrate. Catalysis depends on K165, which acts as the Proton acceptor. K167 lines the substrate pocket. Residues K191, D193, and E194 each coordinate Mg(2+). N6-carboxylysine is present on K191. H284 functions as the Proton acceptor in the catalytic mechanism. Substrate-binding residues include R285, H317, and S369.

This sequence belongs to the RuBisCO large chain family. Type I subfamily. In terms of assembly, heterohexadecamer of 8 large chains and 8 small chains; disulfide-linked. The disulfide link is formed within the large subunit homodimers. It depends on Mg(2+) as a cofactor. Post-translationally, the disulfide bond which can form in the large chain dimeric partners within the hexadecamer appears to be associated with oxidative stress and protein turnover.

It localises to the plastid. It is found in the chloroplast. It carries out the reaction 2 (2R)-3-phosphoglycerate + 2 H(+) = D-ribulose 1,5-bisphosphate + CO2 + H2O. The enzyme catalyses D-ribulose 1,5-bisphosphate + O2 = 2-phosphoglycolate + (2R)-3-phosphoglycerate + 2 H(+). Functionally, ruBisCO catalyzes two reactions: the carboxylation of D-ribulose 1,5-bisphosphate, the primary event in carbon dioxide fixation, as well as the oxidative fragmentation of the pentose substrate in the photorespiration process. Both reactions occur simultaneously and in competition at the same active site. This chain is Ribulose bisphosphate carboxylase large chain, found in Clitoria ternatea (Butterfly pea).